A 446-amino-acid chain; its full sequence is Probable carboxylesterase 16 (446 aa).

A disordered region spans residues 84-131 (PEPDSLRHKDNYNHQPRSDRRHSYGPNHNSPAPAERNESRRNSYGCNN). Positions 87–105 (DSLRHKDNYNHQPRSDRRH) are enriched in basic and acidic residues. Positions 158–160 (HGG) match the Involved in the stabilization of the negatively charged intermediate by the formation of the oxyanion hole motif. Active-site residues include Ser-274, Asp-378, and His-408.

It belongs to the 'GDXG' lipolytic enzyme family. As to expression, expressed in roots, leaves, stems, flowers and siliques.

The catalysed reaction is a carboxylic ester + H2O = an alcohol + a carboxylate + H(+). In terms of biological role, carboxylesterase acting on esters with varying acyl chain length. The chain is Probable carboxylesterase 16 (CXE16) from Arabidopsis thaliana (Mouse-ear cress).